Here is a 64-residue protein sequence, read N- to C-terminus: Large ribosomal subunit protein bL28 (64 aa).

The protein belongs to the bacterial ribosomal protein bL28 family.

This Trichlorobacter lovleyi (strain ATCC BAA-1151 / DSM 17278 / SZ) (Geobacter lovleyi) protein is Large ribosomal subunit protein bL28.